A 274-amino-acid chain; its full sequence is Protein CIMAP1C (274 aa).

The interval 1 to 27 (MKLPKGTRSSVYFAQHPEKEPLPSRQE) is disordered. Residues 16–27 (HPEKEPLPSRQE) are compositionally biased toward basic and acidic residues. STPGR repeat units lie at residues 199–224 (PGPT…MAKR) and 235–260 (PGPG…MGIK).

Belongs to the CIMAP family.

This chain is Protein CIMAP1C, found in Homo sapiens (Human).